The chain runs to 416 residues: Adenylosuccinate synthetase (416 aa).

Residues 11–17 (GDEGKGK) and 39–41 (GHT) contribute to the GTP site. The active-site Proton acceptor is Asp-12. The Mg(2+) site is built by Asp-12 and Gly-39. IMP contacts are provided by residues 12–15 (DEGK), 37–40 (NAGH), Thr-125, Arg-139, Gln-214, Thr-229, and Arg-290. His-40 functions as the Proton donor in the catalytic mechanism. 286–292 (TTTGRPR) is a substrate binding site. Residues Arg-292, 318–320 (KLD), and 405–407 (SLG) contribute to the GTP site.

The protein belongs to the adenylosuccinate synthetase family. In terms of assembly, homodimer. Requires Mg(2+) as cofactor.

It is found in the cytoplasm. The catalysed reaction is IMP + L-aspartate + GTP = N(6)-(1,2-dicarboxyethyl)-AMP + GDP + phosphate + 2 H(+). It functions in the pathway purine metabolism; AMP biosynthesis via de novo pathway; AMP from IMP: step 1/2. Its function is as follows. Plays an important role in the de novo pathway of purine nucleotide biosynthesis. Catalyzes the first committed step in the biosynthesis of AMP from IMP. This is Adenylosuccinate synthetase from Picrophilus torridus (strain ATCC 700027 / DSM 9790 / JCM 10055 / NBRC 100828 / KAW 2/3).